Reading from the N-terminus, the 184-residue chain is ATP-dependent protease subunit HslV (184 aa).

Residue Thr12 is part of the active site. Na(+)-binding residues include Ala166, Cys169, and Thr172.

Belongs to the peptidase T1B family. HslV subfamily. In terms of assembly, a double ring-shaped homohexamer of HslV is capped on each side by a ring-shaped HslU homohexamer. The assembly of the HslU/HslV complex is dependent on binding of ATP.

The protein resides in the cytoplasm. The catalysed reaction is ATP-dependent cleavage of peptide bonds with broad specificity.. Allosterically activated by HslU binding. Functionally, protease subunit of a proteasome-like degradation complex believed to be a general protein degrading machinery. This chain is ATP-dependent protease subunit HslV, found in Brucella anthropi (strain ATCC 49188 / DSM 6882 / CCUG 24695 / JCM 21032 / LMG 3331 / NBRC 15819 / NCTC 12168 / Alc 37) (Ochrobactrum anthropi).